A 97-amino-acid chain; its full sequence is Small integral membrane protein 8 (97 aa).

Residues M1–N22 are disordered. The span at A9–L20 shows a compositional bias: basic and acidic residues. A helical membrane pass occupies residues P48–T70.

The protein belongs to the SMIM8 family.

The protein resides in the membrane. In Bos taurus (Bovine), this protein is Small integral membrane protein 8 (SMIM8).